Reading from the N-terminus, the 564-residue chain is Acetylcholine receptor subunit alpha-type deg-3 (564 aa).

The signal sequence occupies residues Met-1–Thr-20. Residues Ser-21–Tyr-268 are Extracellular-facing. Asn-25, Asn-37, Asn-125, and Asn-198 each carry an N-linked (GlcNAc...) asparagine glycan. Cystine bridges form between Cys-185–Cys-199 and Cys-248–Cys-249. The next 3 membrane-spanning stretches (helical) occupy residues Tyr-269–Phe-289, Ile-302–Val-319, and Phe-329–Val-353. Residues Val-354–Arg-526 lie on the Cytoplasmic side of the membrane. A helical transmembrane segment spans residues Phe-527 to Gly-547.

This sequence belongs to the ligand-gated ion channel (TC 1.A.9) family. Acetylcholine receptor (TC 1.A.9.1) subfamily. The functional receptor is a heteromer of deg-3 and des-2. Interacts with ric-3; which is required for proper receptor folding.

Its subcellular location is the postsynaptic cell membrane. The protein localises to the cell membrane. Its function is as follows. Subunit of the non-synaptic neuronal acetylcholine receptor, which may play a role in chemotaxis towards choline. After binding choline or acetylcholine, the AChR responds by an extensive change in conformation that affects all subunits and leads to opening of an ion-conducting channel across the plasma membrane. The sequence is that of Acetylcholine receptor subunit alpha-type deg-3 (deg-3) from Caenorhabditis elegans.